Consider the following 682-residue polypeptide: Potassium-transporting ATPase ATP-binding subunit (682 aa).

4 helical membrane passes run 34-54, 62-82, 219-239, and 254-274; these read PVMFIVWIGSLLTTCISIAMA, ALFSAAISGWLWVTVLFANFA, IALTILLIALTIVFLLATATL, and VLVALLVCLIPTTIGGLLSAI. The active-site 4-aspartylphosphate intermediate is the aspartate 307. ATP-binding positions include aspartate 344, glutamate 348, 377 to 384, and lysine 395; that span reads FTAQSRMS. Residues aspartate 518 and aspartate 522 each contribute to the Mg(2+) site. The next 3 membrane-spanning stretches (helical) occupy residues 588–608, 616–636, and 656–676; these read FAIIPAAFAATYPQLNALNIM, AILSAVIFNALIIVFLIPLAL, and IYGLGGLLVPFIGIKVIDLLL.

It belongs to the cation transport ATPase (P-type) (TC 3.A.3) family. Type IA subfamily. In terms of assembly, the system is composed of three essential subunits: KdpA, KdpB and KdpC.

It localises to the cell inner membrane. It catalyses the reaction K(+)(out) + ATP + H2O = K(+)(in) + ADP + phosphate + H(+). In terms of biological role, part of the high-affinity ATP-driven potassium transport (or Kdp) system, which catalyzes the hydrolysis of ATP coupled with the electrogenic transport of potassium into the cytoplasm. This subunit is responsible for energy coupling to the transport system and for the release of the potassium ions to the cytoplasm. The chain is Potassium-transporting ATPase ATP-binding subunit from Shigella boydii serotype 4 (strain Sb227).